Reading from the N-terminus, the 420-residue chain is UDP-N-acetylglucosamine 1-carboxyvinyltransferase (420 aa).

22–23 (KN) lines the phosphoenolpyruvate pocket. Arg-92 provides a ligand contact to UDP-N-acetyl-alpha-D-glucosamine. Cys-116 functions as the Proton donor in the catalytic mechanism. At Cys-116 the chain carries 2-(S-cysteinyl)pyruvic acid O-phosphothioketal. UDP-N-acetyl-alpha-D-glucosamine contacts are provided by residues 121 to 125 (RPVDQ), Asp-304, and Ile-326.

It belongs to the EPSP synthase family. MurA subfamily.

It is found in the cytoplasm. The enzyme catalyses phosphoenolpyruvate + UDP-N-acetyl-alpha-D-glucosamine = UDP-N-acetyl-3-O-(1-carboxyvinyl)-alpha-D-glucosamine + phosphate. Its pathway is cell wall biogenesis; peptidoglycan biosynthesis. In terms of biological role, cell wall formation. Adds enolpyruvyl to UDP-N-acetylglucosamine. This Paraburkholderia phymatum (strain DSM 17167 / CIP 108236 / LMG 21445 / STM815) (Burkholderia phymatum) protein is UDP-N-acetylglucosamine 1-carboxyvinyltransferase.